Here is a 623-residue protein sequence, read N- to C-terminus: V-type proton ATPase catalytic subunit A (623 aa).

An ATP-binding site is contributed by 252–259; sequence GAFGCGKT.

It belongs to the ATPase alpha/beta chains family. V-ATPase is a heteromultimeric enzyme composed of a peripheral catalytic V1 complex (main components: subunits A, B, C, D, E, and F) attached to an integral membrane V0 proton pore complex (main component: the proteolipid protein).

It catalyses the reaction ATP + H2O + 4 H(+)(in) = ADP + phosphate + 5 H(+)(out). Catalytic subunit of the peripheral V1 complex of vacuolar ATPase. V-ATPase vacuolar ATPase is responsible for acidifying a variety of intracellular compartments in eukaryotic cells. In Brassica napus (Rape), this protein is V-type proton ATPase catalytic subunit A.